A 379-amino-acid polypeptide reads, in one-letter code: Beta sliding clamp (379 aa).

It belongs to the beta sliding clamp family. Forms a ring-shaped head-to-tail homodimer around DNA which binds and tethers DNA polymerases and other proteins to the DNA. The DNA replisome complex has a single clamp-loading complex (3 tau and 1 each of delta, delta', psi and chi subunits) which binds 3 Pol III cores (1 core on the leading strand and 2 on the lagging strand) each with a beta sliding clamp dimer. Additional proteins in the replisome are other copies of gamma, psi and chi, Ssb, DNA helicase and RNA primase.

It is found in the cytoplasm. Its function is as follows. Confers DNA tethering and processivity to DNA polymerases and other proteins. Acts as a clamp, forming a ring around DNA (a reaction catalyzed by the clamp-loading complex) which diffuses in an ATP-independent manner freely and bidirectionally along dsDNA. Initially characterized for its ability to contact the catalytic subunit of DNA polymerase III (Pol III), a complex, multichain enzyme responsible for most of the replicative synthesis in bacteria; Pol III exhibits 3'-5' exonuclease proofreading activity. The beta chain is required for initiation of replication as well as for processivity of DNA replication. The protein is Beta sliding clamp (dnaN) of Rickettsia felis (strain ATCC VR-1525 / URRWXCal2) (Rickettsia azadi).